Here is a 445-residue protein sequence, read N- to C-terminus: Solute carrier family 52, riboflavin transporter, member 2 (445 aa).

Helical transmembrane passes span 14–34 (LLVA…WVEL), 47–67 (LPSY…VVTL), 86–106 (VLGM…APVA), 112–132 (VAFL…NVTF), 147–167 (FFLG…VQGV), and 196–216 (FFWA…GLLL). Positions 228–264 (ELGSGLQVGAPGAEEEVEESSPLQEPPSQAAGTTPGP) are disordered. A compositionally biased stretch (low complexity) spans 247–258 (SSPLQEPPSQAA). 5 consecutive transmembrane segments (helical) span residues 277-297 (ACLL…LPAV), 312-332 (LAVV…MGVL), 339-359 (LGGL…LAVL), 366-386 (VGTS…LGVF), and 404-424 (ALLA…VAMF).

Belongs to the riboflavin transporter family. As to expression, highly expressed in brain, fetal brain and salivary gland. Weakly expressed in other tissues.

Its subcellular location is the cell membrane. It catalyses the reaction riboflavin(in) = riboflavin(out). With respect to regulation, riboflavin transport is Na(+)-independent but moderately pH-sensitive. Activity is strongly inhibited by riboflavin analogs, such as lumiflavin. Weakly inhibited by flavin adenine dinucleotide (FAD) and flavin mononucleotide (FMN). Its function is as follows. Plasma membrane transporter mediating the uptake by cells of the water soluble vitamin B2/riboflavin that plays a key role in biochemical oxidation-reduction reactions of the carbohydrate, lipid, and amino acid metabolism. Humans are unable to synthesize vitamin B2/riboflavin and must obtain it via intestinal absorption. May also act as a receptor for 4-hydroxybutyrate. Functionally, (Microbial infection) In case of infection by retroviruses, acts as a cell receptor to retroviral envelopes similar to the porcine endogenous retrovirus (PERV-A). This Homo sapiens (Human) protein is Solute carrier family 52, riboflavin transporter, member 2 (SLC52A2).